A 198-amino-acid chain; its full sequence is Peptidyl-tRNA hydrolase (198 aa).

Y14 provides a ligand contact to tRNA. H19 serves as the catalytic Proton acceptor. TRNA is bound by residues Y64, N66, and N112.

The protein belongs to the PTH family. As to quaternary structure, monomer.

The protein resides in the cytoplasm. It catalyses the reaction an N-acyl-L-alpha-aminoacyl-tRNA + H2O = an N-acyl-L-amino acid + a tRNA + H(+). Hydrolyzes ribosome-free peptidyl-tRNAs (with 1 or more amino acids incorporated), which drop off the ribosome during protein synthesis, or as a result of ribosome stalling. In terms of biological role, catalyzes the release of premature peptidyl moieties from peptidyl-tRNA molecules trapped in stalled 50S ribosomal subunits, and thus maintains levels of free tRNAs and 50S ribosomes. The polypeptide is Peptidyl-tRNA hydrolase (Beijerinckia indica subsp. indica (strain ATCC 9039 / DSM 1715 / NCIMB 8712)).